We begin with the raw amino-acid sequence, 155 residues long: Fibroblast growth factor 1 (155 aa).

The propeptide occupies 1–15; sequence MAEGDITTFNAITES. N33 is a binding site for heparin. Residues 127 to 143 form a heparin-binding region; the sequence is KKNGASKKGSRTHYGQK.

It belongs to the heparin-binding growth factors family.

The protein resides in the secreted. It is found in the cytoplasm. Its subcellular location is the cell cortex. The protein localises to the cytosol. It localises to the nucleus. Plays an important role in the regulation of cell survival, cell division, angiogenesis, cell differentiation and cell migration. Functions as a potent mitogen in vitro. Acts as a ligand for FGFR1 and integrins. Binds to FGFR1 in the presence of heparin leading to FGFR1 dimerization and activation via sequential autophosphorylation on tyrosine residues which act as docking sites for interacting proteins, leading to the activation of several signaling cascades. Binds to integrins. Its binding to integrins and subsequent ternary complex formation with integrins and FGFR1 are essential for FGF1 signaling. The polypeptide is Fibroblast growth factor 1 (fgf1) (Xenopus laevis (African clawed frog)).